The primary structure comprises 454 residues: MERKDFETWLDNISVTFLSLTDLQKNETLDHLISLSGAVQLRHLSNNLETLLKRDFLKLLPLELSFYLLKWLDPQTLLTCCLVSKQWNKVISACTEVWQTACKNLGWQIDDSVQDALHWKKVYLKAILRMKQLEDHEAFETSSLIGHSARVYALYYKDGLLCTGSDDLSAKLWDVSTGQCVYGIQTHTCAAVKFDEQKLVTGSFDNTVACWEWSSGARTQHFRGHTGAVFSVDYSDELDILVSGSADFAVKVWALSAGTCLNTLTGHTEWVTKVVLQQCKVKSLLHSPGDYILLSADKYEIKIWPIGREINCKCLKTLSVSEDRSICLQPRLHFDGKYIVCSSALGLYQWDFASYDILRVIKTPEVANLALLGFGDVFALLFDNHYLYIMDLRTESLISRWPLPEYRKSKRGSSFLAGEASWLNGLDGHNDTGLVFATSMPDHSIHLVLWKEHG.

One can recognise an F-box domain in the interval 54-101; the sequence is RDFLKLLPLELSFYLLKWLDPQTLLTCCLVSKQWNKVISACTEVWQTA. WD repeat units lie at residues 146–183, 185–221, 224–265, and 276–314; these read GHSARVYALYYKDGLLCTGSDDLSAKLWDVSTGQCVYG, QTHTCAAVKFDEQKLVTGSFDNTVACWEWSSGARTQH, GHTG…NTLT, and LQQCKVKSLLHSPGDYILLSADKYEIKIWPIGREINCKC. N6-acetyllysine is present on lysine 298.

Directly interacts with SKP1 and CUL1.

Functionally, substrate-recognition component of the SCF (SKP1-CUL1-F-box protein)-type E3 ubiquitin ligase complex. This Rattus norvegicus (Rat) protein is F-box/WD repeat-containing protein 2.